The primary structure comprises 527 residues: Coproporphyrinogen III oxidase (527 aa).

The span at 1–14 shows a compositional bias: low complexity; it reads MSTTDRVTTPTPTV. Residues 1–23 are disordered; the sequence is MSTTDRVTTPTPTVSGTDAPGPD. Residues 33–38, 56–57, Lys-64, and 78–81 contribute to the FAD site; these read GGGITG, ES, and GPDS. Residues 231-267 form a disordered region; it reads RRAARQRAAQNNAQQNSSHQNSTGQNNSAGTRGPAAS. A compositionally biased stretch (low complexity) spans 236–252; it reads QRAAQNNAQQNSSHQNS. Residues Val-300, Trp-448, and 487 to 489 each bind FAD; that span reads VGL.

This sequence belongs to the protoporphyrinogen/coproporphyrinogen oxidase family. Coproporphyrinogen III oxidase subfamily. Requires FAD as cofactor.

The protein localises to the cytoplasm. The catalysed reaction is coproporphyrinogen III + 3 O2 = coproporphyrin III + 3 H2O2. The protein operates within porphyrin-containing compound metabolism; protoheme biosynthesis. Its function is as follows. Involved in coproporphyrin-dependent heme b biosynthesis. Catalyzes the oxidation of coproporphyrinogen III to coproporphyrin III. This Propionibacterium freudenreichii subsp. freudenreichii protein is Coproporphyrinogen III oxidase.